We begin with the raw amino-acid sequence, 357 residues long: Cobalt-precorrin-5B C(1)-methyltransferase (357 aa).

The protein belongs to the CbiD family.

The enzyme catalyses Co-precorrin-5B + S-adenosyl-L-methionine = Co-precorrin-6A + S-adenosyl-L-homocysteine. It participates in cofactor biosynthesis; adenosylcobalamin biosynthesis; cob(II)yrinate a,c-diamide from sirohydrochlorin (anaerobic route): step 6/10. In terms of biological role, catalyzes the methylation of C-1 in cobalt-precorrin-5B to form cobalt-precorrin-6A. This Rhodospirillum rubrum (strain ATCC 11170 / ATH 1.1.1 / DSM 467 / LMG 4362 / NCIMB 8255 / S1) protein is Cobalt-precorrin-5B C(1)-methyltransferase.